A 341-amino-acid polypeptide reads, in one-letter code: L-threonine 3-dehydrogenase (341 aa).

Position 38 (Cys-38) interacts with Zn(2+). Active-site charge relay system residues include Thr-40 and His-43. Zn(2+) is bound by residues His-63, Glu-64, Cys-93, Cys-96, Cys-99, and Cys-107. Residues Ile-175, Asp-195, Arg-200, 262–264, and 286–287 each bind NAD(+); these read LGI and IY.

It belongs to the zinc-containing alcohol dehydrogenase family. As to quaternary structure, homotetramer. Zn(2+) is required as a cofactor.

Its subcellular location is the cytoplasm. The enzyme catalyses L-threonine + NAD(+) = (2S)-2-amino-3-oxobutanoate + NADH + H(+). It participates in amino-acid degradation; L-threonine degradation via oxydo-reductase pathway; glycine from L-threonine: step 1/2. Its function is as follows. Catalyzes the NAD(+)-dependent oxidation of L-threonine to 2-amino-3-ketobutyrate. This chain is L-threonine 3-dehydrogenase, found in Proteus mirabilis (strain HI4320).